The sequence spans 532 residues: 5-methylcytosine-modifying enzyme 1 (532 aa).

335–337 (SLT) contacts L-ascorbate. The Fe cation site is built by His-345, Asp-347, and His-397. 397–399 (HGT) provides a ligand contact to L-ascorbate.

It belongs to the TET family. It depends on Fe(2+) as a cofactor.

The protein resides in the nucleus. The enzyme catalyses a 5-methyl-2'-deoxycytidine in DNA + L-ascorbate + O2 = a (8S,9S)-5-glyceryl-2'-deoxycytidine in DNA + glyoxylate + CO2. It catalyses the reaction a 5-methyl-2'-deoxycytidine in DNA + L-ascorbate + O2 = a (8S,9R)-5-glyceryl-2'-deoxycytidine in DNA + glyoxylate + CO2. Dioxygenase that catalyzes DNA modification by mediating the conversion of the modified genomic base 5-methylcytosine (5mC) into 5-glyceryl-methylcytosine (5gmC). Catalyzes the conjugation of a glyceryl moiety from L-ascorbate (vitamin C) to the methyl group of 5mC through a carbon-carbon bond. 5gmC DNA modification may be required during photosynthesis as an epigenetic mark that couteracts DNA methylation. The protein is 5-methylcytosine-modifying enzyme 1 of Chlamydomonas reinhardtii (Chlamydomonas smithii).